We begin with the raw amino-acid sequence, 431 residues long: Urokinase-type plasminogen activator (431 aa).

Residues 1-20 (MRALLARLLLCVLVVSDSKG) form the signal peptide. Residues 27 to 63 (VPSNCDCLNGGTCVSNKYFSNIHWCNCPKKFGGQHCE) form the EGF-like domain. 6 disulfides stabilise this stretch: Cys31–Cys39, Cys33–Cys51, Cys53–Cys62, Cys70–Cys151, Cys91–Cys133, and Cys122–Cys146. Positions 34-57 (LNGGTCVSNKYFSNIHWCNCPKKF) are binds urokinase plasminogen activator surface receptor. The region spanning 69-151 (TCYEGNGHFY…LVQECMVHDC (83 aa)) is the Kringle domain. Residues 152–178 (ADGKKPSSPPEELKFQCGQKTLRPRFK) form a connecting peptide region. Ser158 is modified (phosphoserine). 6 disulfides stabilise this stretch: Cys168–Cys299, Cys209–Cys225, Cys217–Cys288, Cys313–Cys382, Cys345–Cys361, and Cys372–Cys400. One can recognise a Peptidase S1 domain in the interval 179-424 (IVGGEFTTIE…FLPWIRSHTK (246 aa)). Residues His224 and Asp275 each act as charge relay system in the active site. An N-linked (GlcNAc...) asparagine glycan is attached at Asn322. A Phosphoserine modification is found at Ser323. Catalysis depends on Ser376, which acts as the Charge relay system.

It belongs to the peptidase S1 family. As to quaternary structure, found in high and low molecular mass forms. Each consists of two chains, A and B. The high molecular mass form contains a long chain A which is cleaved to yield a short chain A. Forms heterodimer with SERPINA5. Binds LRP1B; binding is followed by internalization and degradation. Interacts with MRC2. Interacts with PLAUR. In complex with SERPINE1, interacts with PLAUR/uPAR. Interacts with SORL1 and LRP1, either alone or in complex with SERPINE1; these interactions are abolished in the presence of LRPAP1/RAP. The ternary complex composed of PLAUR-PLAU-PAI1 also interacts with SORLA. Phosphorylation of Ser-158 and Ser-323 abolishes proadhesive ability but does not interfere with receptor binding. Post-translationally, produced as an inactive single-chain protein (pro-uPA or sc-uPA), is processed into the active disulfide-linked two-chain form of PLAU/uPA by a proteolytic event mediated, at least, by TMPRSS4.

The protein resides in the secreted. It catalyses the reaction Specific cleavage of Arg-|-Val bond in plasminogen to form plasmin.. Inhibited by SERPINA5. Inhibited by SERPINE1. Specifically cleaves the zymogen plasminogen to form the active enzyme plasmin. This is Urokinase-type plasminogen activator (PLAU) from Pongo abelii (Sumatran orangutan).